We begin with the raw amino-acid sequence, 372 residues long: Ligninase H2 (372 aa).

An N-terminal signal peptide occupies residues 1–21 (MAFKQLLAALSVALTLQVTQA). The propeptide occupies 22-28 (APNLDKR). 4 cysteine pairs are disulfide-bonded: cysteine 31/cysteine 44, cysteine 43/cysteine 314, cysteine 63/cysteine 149, and cysteine 278/cysteine 344. Histidine 76 acts as the Proton acceptor in catalysis. Residues aspartate 77, glycine 95, aspartate 97, and serine 99 each contribute to the Ca(2+) site. Histidine 205 serves as a coordination point for heme b. Ca(2+) is bound by residues serine 206, aspartate 223, threonine 225, glutamine 228, and aspartate 230. Residue asparagine 286 is glycosylated (N-linked (GlcNAc...) asparagine).

Belongs to the peroxidase family. Ligninase subfamily. The cofactor is heme b. Ca(2+) is required as a cofactor.

It catalyses the reaction 1-(3,4-dimethoxyphenyl)-2-(2-methoxyphenoxy)propane-1,3-diol + H2O2 = 3,4-dimethoxybenzaldehyde + guaiacol + glycolaldehyde + H2O. The catalysed reaction is 2 (3,4-dimethoxyphenyl)methanol + H2O2 = 2 (3,4-dimethoxyphenyl)methanol radical + 2 H2O. It participates in secondary metabolite metabolism; lignin degradation. In terms of biological role, depolymerization of lignin. Catalyzes the C(alpha)-C(beta) cleavage of the propyl side chains of lignin. The protein is Ligninase H2 (GLG4) of Phanerodontia chrysosporium (White-rot fungus).